Reading from the N-terminus, the 719-residue chain is Phosphoribosylformylglycinamidine synthase subunit PurL (719 aa).

Residue histidine 47 is part of the active site. Positions 50 and 89 each coordinate ATP. Mg(2+) is bound at residue glutamate 91. Residues 92–95 (SHNH) and arginine 114 contribute to the substrate site. Catalysis depends on histidine 93, which acts as the Proton acceptor. Position 115 (aspartate 115) interacts with Mg(2+). Glutamine 238 lines the substrate pocket. A Mg(2+)-binding site is contributed by aspartate 266. 310–312 (ESQ) contacts substrate. ATP-binding residues include aspartate 488 and glycine 525. Asparagine 526 provides a ligand contact to Mg(2+). A substrate-binding site is contributed by serine 528.

It belongs to the FGAMS family. As to quaternary structure, monomer. Part of the FGAM synthase complex composed of 1 PurL, 1 PurQ and 2 PurS subunits.

It localises to the cytoplasm. It catalyses the reaction N(2)-formyl-N(1)-(5-phospho-beta-D-ribosyl)glycinamide + L-glutamine + ATP + H2O = 2-formamido-N(1)-(5-O-phospho-beta-D-ribosyl)acetamidine + L-glutamate + ADP + phosphate + H(+). It participates in purine metabolism; IMP biosynthesis via de novo pathway; 5-amino-1-(5-phospho-D-ribosyl)imidazole from N(2)-formyl-N(1)-(5-phospho-D-ribosyl)glycinamide: step 1/2. In terms of biological role, part of the phosphoribosylformylglycinamidine synthase complex involved in the purines biosynthetic pathway. Catalyzes the ATP-dependent conversion of formylglycinamide ribonucleotide (FGAR) and glutamine to yield formylglycinamidine ribonucleotide (FGAM) and glutamate. The FGAM synthase complex is composed of three subunits. PurQ produces an ammonia molecule by converting glutamine to glutamate. PurL transfers the ammonia molecule to FGAR to form FGAM in an ATP-dependent manner. PurS interacts with PurQ and PurL and is thought to assist in the transfer of the ammonia molecule from PurQ to PurL. The protein is Phosphoribosylformylglycinamidine synthase subunit PurL of Ruegeria pomeroyi (strain ATCC 700808 / DSM 15171 / DSS-3) (Silicibacter pomeroyi).